The sequence spans 257 residues: Phosphate import ATP-binding protein PstB (257 aa).

The region spanning 11–252 is the ABC transporter domain; the sequence is IQVRNLNFYY…PAKKQTEDYI (242 aa). An ATP-binding site is contributed by 43-50; that stretch reads GPSGCGKS.

Belongs to the ABC transporter superfamily. Phosphate importer (TC 3.A.1.7) family. The complex is composed of two ATP-binding proteins (PstB), two transmembrane proteins (PstC and PstA) and a solute-binding protein (PstS).

The protein resides in the cell inner membrane. The enzyme catalyses phosphate(out) + ATP + H2O = ADP + 2 phosphate(in) + H(+). In terms of biological role, part of the ABC transporter complex PstSACB involved in phosphate import. Responsible for energy coupling to the transport system. The protein is Phosphate import ATP-binding protein PstB of Escherichia coli O6:K15:H31 (strain 536 / UPEC).